Consider the following 115-residue polypeptide: NADH-ubiquinone oxidoreductase chain 3 (115 aa).

3 helical membrane-spanning segments follow: residues 4–24, 55–75, and 87–107; these read LTAL…AFWL, FFLV…LLPL, and MMLT…YEWM.

This sequence belongs to the complex I subunit 3 family. In terms of assembly, core subunit of respiratory chain NADH dehydrogenase (Complex I) which is composed of 45 different subunits. Interacts with TMEM186. Interacts with TMEM242.

It is found in the mitochondrion inner membrane. It catalyses the reaction a ubiquinone + NADH + 5 H(+)(in) = a ubiquinol + NAD(+) + 4 H(+)(out). Core subunit of the mitochondrial membrane respiratory chain NADH dehydrogenase (Complex I) which catalyzes electron transfer from NADH through the respiratory chain, using ubiquinone as an electron acceptor. Essential for the catalytic activity of complex I. The protein is NADH-ubiquinone oxidoreductase chain 3 of Peromyscus boylii (Brush deermouse).